A 4574-amino-acid polypeptide reads, in one-letter code: E3 ubiquitin-protein ligase MYCBP2 (4574 aa).

Disordered stretches follow at residues 92–115 (RGKKALSKKKLKRRQKVKSKVKTR) and 599–620 (SASKGEDGESTKSRRQPKPYKP). RCC1 repeat units follow at residues 591–646 (DGSV…IVTK), 690–746 (SGEV…MMCQ), 943–993 (NGDV…VLLM), and 995–1051 (GQVF…LRID). Residues 611-620 (SRRQPKPYKP) show a composition bias toward basic residues. Cys1733 and Cys1850 are disulfide-bonded. Disordered stretches follow at residues 1976-1998 (APPTFNPNQSTDSTTGNQPEQGL) and 2313-2332 (LQRLPGTSSNSATGTDLTFG). Polar residues-rich tracts occupy residues 1981–1998 (NPNQSTDSTTGNQPEQGL) and 2317–2328 (PGTSSNSATGTD). The Filamin repeat unit spans residues 2336-2417 (APKLEATYEP…IHVTIDGIEI (82 aa)). 5 disordered regions span residues 2613–2824 (GFDY…PSPH), 2845–2922 (SNDE…KQAM), 3085–3116 (SPGSSAILKKKENEKDSKKTKKEKKKKEKAEV), 3345–3365 (PGSNMKSMPPSLETSPITDSD), and 3505–3526 (FETEEEEDEENKGNKENLEQEK). Basic and acidic residues-rich tracts occupy residues 2639-2663 (HRQESRSSKTDSHSNRSVDQVKSKN) and 2678-2688 (DTGKLRSDSHS). Positions 2716–2729 (NPGSRSSSPKQKTF) are enriched in polar residues. Residues 2730–2745 (TSGRSSPSSTSSPRSS) show a composition bias toward low complexity. Composition is skewed to basic and acidic residues over residues 2761–2772 (VHLDPPRERSKS), 2854–2864 (SELHNAEEGSS), and 2874–2883 (PVKEELESRS). Basic residues-rich tracts occupy residues 2887–2900 (VSRKTSSRHVRPKK) and 3102–3111 (KKTKKEKKKK). Basic and acidic residues predominate over residues 3515-3526 (NKGNKENLEQEK). The DOC domain maps to 3617–3795 (FNISVQSGYE…SVAQQKNCEA (179 aa)). The disordered stretch occupies residues 3815-3841 (GDAEPTPEQEEKNLLSSPEGEDKAPSD). Residues Cys4324, Cys4327, Cys4342, His4344, His4347, Cys4350, Cys4371, Cys4374, Cys4440, and Cys4443 each contribute to the Zn(2+) site. An RING-type; atypical zinc finger spans residues 4324 to 4375 (CMICFTEALSAAPAIQLDCSHVFHLQCTRRVLENRWLGPRITFGFMSCPICK). A tandem cysteine domain region spans residues 4435-4572 (YAYYVCFKCK…LGCGVCRNAH (138 aa)). Cys4454 is a catalytic residue. Positions 4471, 4474, 4483, 4486, 4495, 4498, and 4499 each coordinate Zn(2+). The active site involves Cys4506. Zn(2+) contacts are provided by Cys4513, Cys4516, Cys4534, Cys4548, His4554, Cys4565, and Cys4568.

It belongs to the RING-Cys relay (RCR) family. In terms of tissue distribution, widely expressed when the visual system begins developing. In the eye, expressed in all cells, including retinal ganglion cells, with no obvious gradient.

It is found in the nucleus. It localises to the cell projection. The protein localises to the axon. Its subcellular location is the cytoplasm. The protein resides in the cytoskeleton. The catalysed reaction is [E2 ubiquitin-conjugating enzyme]-S-ubiquitinyl-L-cysteine + [acceptor protein]-L-threonine = [E2 ubiquitin-conjugating enzyme]-L-cysteine + [acceptor protein]-3-O-ubiquitinyl-L-threonine.. Its pathway is protein modification; protein ubiquitination. In terms of biological role, atypical E3 ubiquitin-protein ligase which specifically mediates ubiquitination of threonine and serine residues on target proteins, instead of ubiquitinating lysine residues. Shows esterification activity towards both threonine and serine, with a preference for threonine, and acts via two essential catalytic cysteine residues that relay ubiquitin to its substrate via thioester intermediates. Interacts with the E2 enzymes UBE2D1, UBE2D3, UBE2E1 and UBE2L3. Plays a key role in neural development, probably by mediating ubiquitination of threonine residues on target proteins. Involved in different processes such as regulation of neurite outgrowth, synaptic growth, synaptogenesis and axon degeneration. Required in the visual system for correct fasciculation, targeting and mapping of retinal axons. Acts as a regulator of pteridine synthesis. May play a role in the regulation of the circadian clock gene expression. This Danio rerio (Zebrafish) protein is E3 ubiquitin-protein ligase MYCBP2.